The primary structure comprises 67 residues: Protein Tpau_2998 (67 aa).

This chain is Protein Tpau_2998, found in Tsukamurella paurometabola (strain ATCC 8368 / DSM 20162 / CCUG 35730 / CIP 100753 / JCM 10117 / KCTC 9821 / NBRC 16120 / NCIMB 702349 / NCTC 13040) (Corynebacterium paurometabolum).